A 127-amino-acid polypeptide reads, in one-letter code: MPEVSAKGTTISKKGFKKAVTKTQKKEGRKRKRCRKESYSIYIYKVLKQVHPDTGISSKAMSIMNSFVTDIFERIAGEASRLAHYNKRSTITSREIQTAVRLLLPGELAKHAVSEGTKAVTKYTSSK.

The disordered stretch occupies residues 1 to 32 (MPEVSAKGTTISKKGFKKAVTKTQKKEGRKRK). Pro-2 carries the N-acetylproline modification. An N6-acetyllysine; alternate mark is found at Lys-7, Lys-13, Lys-14, Lys-17, Lys-18, Lys-22, and Lys-25. Lys-7, Lys-13, Lys-14, Lys-17, Lys-18, Lys-22, Lys-25, and Lys-36 each carry N6-crotonyllysine; alternate. An N6-lactoyllysine; alternate mark is found at Lys-7 and Lys-13. Lys-7 participates in a covalent cross-link: Glycyl lysine isopeptide (Lys-Gly) (interchain with G-Cter in SUMO2); alternate. An N6-lactoyllysine; alternate mark is found at Lys-17, Lys-18, Lys-22, and Lys-25. Lys-22 participates in a covalent cross-link: Glycyl lysine isopeptide (Lys-Gly) (interchain with G-Cter in SUMO2); alternate. An N6-succinyllysine; alternate modification is found at Lys-36. Lys-36 is covalently cross-linked (Glycyl lysine isopeptide (Lys-Gly) (interchain with G-Cter in ubiquitin); alternate). The residue at position 38 (Ser-38) is a Phosphoserine. Residue Lys-45 is modified to N6-lactoyllysine; alternate. At Lys-48 the chain carries N6-methyllysine. Residue Lys-59 is modified to N6,N6-dimethyllysine. Arg-81 is modified (dimethylated arginine). Lys-87 bears the N6-acetyllysine; alternate mark. Lys-87 carries the post-translational modification N6-lactoyllysine; alternate. Residue Lys-87 is modified to N6,N6,N6-trimethyllysine; alternate. Omega-N-methylarginine occurs at positions 88 and 94. Lys-110 is modified (N6-lactoyllysine; alternate). Lys-110 carries the N6-methyllysine modification. Residue Thr-117 is modified to Phosphothreonine. An N6-lactoyllysine; alternate mark is found at Lys-118 and Lys-122. 2 positions are modified to N6-succinyllysine; alternate: Lys-118 and Lys-122. Lys-118 is modified (N6-methylated lysine; alternate). Residue Lys-122 forms a Glycyl lysine isopeptide (Lys-Gly) (interchain with G-Cter in ubiquitin); alternate linkage.

The protein belongs to the histone H2B family. As to quaternary structure, the nucleosome is a histone octamer containing two molecules each of H2A, H2B, H3 and H4 assembled in one H3-H4 heterotetramer and two H2A-H2B heterodimers. Monoubiquitination at Lys-36 by the MSL1/MSL2 dimer is required for histone H3 'Lys-4' (H3K4me) and 'Lys-79' (H3K79me) methylation and transcription activation at specific gene loci, such as HOXA9 and MEIS1 loci. Similarly, monoubiquitination of Lys-122 (H2BK120Ub) by the RNF20/40 complex gives a specific tag for epigenetic transcriptional activation and is also prerequisite for histone H3 'Lys-4' and 'Lys-79' methylation. It also functions cooperatively with the FACT dimer to stimulate elongation by RNA polymerase II. H2BK120Ub also acts as a regulator of mRNA splicing: deubiquitination by USP49 is required for efficient cotranscriptional splicing of a large set of exons. In terms of processing, crotonylation (Kcr) is specifically present in male germ cells and marks testis-specific genes in post-meiotic cells, including X-linked genes that escape sex chromosome inactivation in haploid cells. Crotonylation marks active promoters and enhancers and confers resistance to transcriptional repressors. It is also associated with post-meiotically activated genes on autosomes. Post-translationally, acetylated during spermatogenesis. Acetylated form is most abundant in spermatogonia compared to spermatocytes and round spermatids. Phosphorylated at Thr-117 in spermatogonia, spermatocytes and round spermatids. In terms of processing, methylated at Lys-118 in spermatogonia, spermatocytes and round spermatids. Post-translationally, lactylated in macrophages by EP300/P300 by using lactoyl-CoA directly derived from endogenous or exogenous lactate, leading to stimulates gene transcription. In terms of tissue distribution, testis. Expressed in pachytene spermatocytes during meiotic prophase I in the absence of any significant DNA synthesis.

It localises to the nucleus. Its subcellular location is the chromosome. Its function is as follows. Variant histone specifically required to direct the transformation of dissociating nucleosomes to protamine in male germ cells. Entirely replaces classical histone H2B prior nucleosome to protamine transition and probably acts as a nucleosome dissociating factor that creates a more dynamic chromatin, facilitating the large-scale exchange of histones. Core component of nucleosome. Nucleosomes wrap and compact DNA into chromatin, limiting DNA accessibility to the cellular machineries which require DNA as a template. Histones thereby play a central role in transcription regulation, DNA repair, DNA replication and chromosomal stability. DNA accessibility is regulated via a complex set of post-translational modifications of histones, also called histone code, and nucleosome remodeling. This Rattus norvegicus (Rat) protein is Histone H2B type 1-A.